The following is a 406-amino-acid chain: Proteasome-activating nucleotidase 1 (406 aa).

Acidic residues predominate over residues 1-12 (MTDTVEDVELPY). Positions 1 to 20 (MTDTVEDVELPYDDSASQQD) are disordered. The stretch at 12-70 (YDDSASQQDKLEALEEQLSTLEEENEEMRDRLLDANAENNKYQQKLERLSHENKKLKQS) forms a coiled coil. Residues 192–197 (GTGKTL) and His-331 contribute to the ATP site. The segment at 385–406 (AREKLDQDSEPAAATDVSRTFA) is disordered. The segment at 404–406 (TFA) is docks into pockets in the proteasome alpha-ring to cause gate opening.

The protein belongs to the AAA ATPase family. In terms of assembly, homohexamer. The hexameric complex has a two-ring architecture resembling a top hat that caps the 20S proteasome core at one or both ends. Upon ATP-binding, the C-terminus of PAN interacts with the alpha-rings of the proteasome core by binding to the intersubunit pockets.

The protein resides in the cytoplasm. Functionally, ATPase which is responsible for recognizing, binding, unfolding and translocation of substrate proteins into the archaeal 20S proteasome core particle. Is essential for opening the gate of the 20S proteasome via an interaction with its C-terminus, thereby allowing substrate entry and access to the site of proteolysis. Thus, the C-termini of the proteasomal ATPase function like a 'key in a lock' to induce gate opening and therefore regulate proteolysis. Unfolding activity requires energy from ATP hydrolysis, whereas ATP binding alone promotes ATPase-20S proteasome association which triggers gate opening, and supports translocation of unfolded substrates. The chain is Proteasome-activating nucleotidase 1 from Halobacterium salinarum (strain ATCC 700922 / JCM 11081 / NRC-1) (Halobacterium halobium).